The following is a 164-amino-acid chain: Large ribosomal subunit protein uL11 (164 aa).

The protein belongs to the universal ribosomal protein uL11 family. As to quaternary structure, part of the ribosomal stalk of the 50S ribosomal subunit. Interacts with L10 and the large rRNA to form the base of the stalk. L10 forms an elongated spine to which L12 dimers bind in a sequential fashion forming a multimeric L10(L12)X complex.

Its function is as follows. Forms part of the ribosomal stalk which helps the ribosome interact with GTP-bound translation factors. The sequence is that of Large ribosomal subunit protein uL11 from Pyrococcus abyssi (strain GE5 / Orsay).